Consider the following 237-residue polypeptide: MRPNDRTPAQSRPVTITRQFTAHAEGSVLVEFGETKVLCTASFTEGVPRFLKGKGQGWVTAEYGMLPRSTHSRMDREAARGKQSGRTQEIQRLIGRSLRAAVDMKALGENTIVIDCDVIQADGGTRTAAITGACVALVDALNWARGKGILKNNPLKFLIAAVSVGIYKGEPICDLEYIEDSEAETDMNVVMTETGKMIEIQGTAEGEPFSHEELLSLLELAKHGIREIVDVQKAALS.

Phosphate-binding positions include arginine 86 and 124 to 126 (GTR).

This sequence belongs to the RNase PH family. In terms of assembly, homohexameric ring arranged as a trimer of dimers.

It catalyses the reaction tRNA(n+1) + phosphate = tRNA(n) + a ribonucleoside 5'-diphosphate. Functionally, phosphorolytic 3'-5' exoribonuclease that plays an important role in tRNA 3'-end maturation. Removes nucleotide residues following the 3'-CCA terminus of tRNAs; can also add nucleotides to the ends of RNA molecules by using nucleoside diphosphates as substrates, but this may not be physiologically important. Probably plays a role in initiation of 16S rRNA degradation (leading to ribosome degradation) during starvation. This Shewanella woodyi (strain ATCC 51908 / MS32) protein is Ribonuclease PH.